The sequence spans 325 residues: tRNA N6-adenosine threonylcarbamoyltransferase (325 aa).

The Fe cation site is built by histidine 111 and histidine 115. Substrate-binding positions include 134-138, aspartate 167, glycine 180, aspartate 184, and asparagine 284; that span reads LVSGG. Aspartate 312 provides a ligand contact to Fe cation.

Belongs to the KAE1 / TsaD family. The cofactor is Fe(2+).

It is found in the cytoplasm. It catalyses the reaction L-threonylcarbamoyladenylate + adenosine(37) in tRNA = N(6)-L-threonylcarbamoyladenosine(37) in tRNA + AMP + H(+). In terms of biological role, required for the formation of a threonylcarbamoyl group on adenosine at position 37 (t(6)A37) in tRNAs that read codons beginning with adenine. Is involved in the transfer of the threonylcarbamoyl moiety of threonylcarbamoyl-AMP (TC-AMP) to the N6 group of A37, together with TsaE and TsaB. TsaD likely plays a direct catalytic role in this reaction. This is tRNA N6-adenosine threonylcarbamoyltransferase from Trichodesmium erythraeum (strain IMS101).